Here is an 89-residue protein sequence, read N- to C-terminus: MPLNTEKKQELINSHQTHATDTGSVEVQVAMLSERITQLTGHLQSNKHDYSSRQGLMKMLGRRKSLLGYLKSQSSERYDTLIQKLGIRG.

Basic and acidic residues predominate over residues 1 to 10 (MPLNTEKKQE). The interval 1-22 (MPLNTEKKQELINSHQTHATDT) is disordered. Polar residues predominate over residues 11 to 22 (LINSHQTHATDT).

This sequence belongs to the universal ribosomal protein uS15 family. Part of the 30S ribosomal subunit. Forms a bridge to the 50S subunit in the 70S ribosome, contacting the 23S rRNA.

Its function is as follows. One of the primary rRNA binding proteins, it binds directly to 16S rRNA where it helps nucleate assembly of the platform of the 30S subunit by binding and bridging several RNA helices of the 16S rRNA. In terms of biological role, forms an intersubunit bridge (bridge B4) with the 23S rRNA of the 50S subunit in the ribosome. In Synechococcus sp. (strain RCC307), this protein is Small ribosomal subunit protein uS15.